A 401-amino-acid chain; its full sequence is Phosphoglycerate kinase (401 aa).

Residues 24 to 26 (DFN), Arg-40, 63 to 66 (HFGR), Arg-122, and Arg-155 each bind substrate. Residues Lys-206, Gly-297, Glu-328, and 357 to 360 (GGDS) each bind ATP.

The protein belongs to the phosphoglycerate kinase family. As to quaternary structure, monomer.

The protein localises to the cytoplasm. The enzyme catalyses (2R)-3-phosphoglycerate + ATP = (2R)-3-phospho-glyceroyl phosphate + ADP. The protein operates within carbohydrate degradation; glycolysis; pyruvate from D-glyceraldehyde 3-phosphate: step 2/5. This chain is Phosphoglycerate kinase, found in Acaryochloris marina (strain MBIC 11017).